A 369-amino-acid chain; its full sequence is Phosphate acyltransferase (369 aa).

The interval 342–369 is disordered; sequence ASRAPNSQTAGGERAAAVPQSAQLRMDS.

This sequence belongs to the PlsX family. Homodimer. Probably interacts with PlsY.

It is found in the cytoplasm. The catalysed reaction is a fatty acyl-[ACP] + phosphate = an acyl phosphate + holo-[ACP]. The protein operates within lipid metabolism; phospholipid metabolism. In terms of biological role, catalyzes the reversible formation of acyl-phosphate (acyl-PO(4)) from acyl-[acyl-carrier-protein] (acyl-ACP). This enzyme utilizes acyl-ACP as fatty acyl donor, but not acyl-CoA. In Methylocella silvestris (strain DSM 15510 / CIP 108128 / LMG 27833 / NCIMB 13906 / BL2), this protein is Phosphate acyltransferase.